The following is a 611-amino-acid chain: Large ribosomal subunit assembly factor BipA (611 aa).

The region spanning 7–202 (KNLRNIAIIA…AIVKYTPPPT (196 aa)) is the tr-type G domain. Residues 19–24 (DHGKTT) and 132–135 (NKID) each bind GTP.

It belongs to the TRAFAC class translation factor GTPase superfamily. Classic translation factor GTPase family. BipA subfamily. As to quaternary structure, monomer.

It is found in the cytoplasm. It catalyses the reaction GTP + H2O = GDP + phosphate + H(+). A 50S ribosomal subunit assembly protein with GTPase activity, required for 50S subunit assembly at low temperatures, may also play a role in translation. Binds GTP and analogs. Binds the 70S ribosome between the 30S and 50S subunits, in a similar position as ribosome-bound EF-G; it contacts a number of ribosomal proteins, both rRNAs and the A-site tRNA. In Buchnera aphidicola subsp. Baizongia pistaciae (strain Bp), this protein is Large ribosomal subunit assembly factor BipA.